Here is a 179-residue protein sequence, read N- to C-terminus: MKSTAISRRYAKALVNLAAPDGQLESTYAQLEQLQQAFACEPRLYKLLASPTLAADKIAGLLEGISNYLQLSTTLRNLLGLLQQRQRLEYFDALVADYRELADVQLGLVRARVCSAAPLDAAVQQAISAQLQKRYGKQAVLELAVEPELLGGVRIEVAGQVLDGTIRSGLRRMAGYLNS.

This sequence belongs to the ATPase delta chain family. F-type ATPases have 2 components, F(1) - the catalytic core - and F(0) - the membrane proton channel. F(1) has five subunits: alpha(3), beta(3), gamma(1), delta(1), epsilon(1). F(0) has three main subunits: a(1), b(2) and c(10-14). The alpha and beta chains form an alternating ring which encloses part of the gamma chain. F(1) is attached to F(0) by a central stalk formed by the gamma and epsilon chains, while a peripheral stalk is formed by the delta and b chains.

The protein resides in the cell inner membrane. F(1)F(0) ATP synthase produces ATP from ADP in the presence of a proton or sodium gradient. F-type ATPases consist of two structural domains, F(1) containing the extramembraneous catalytic core and F(0) containing the membrane proton channel, linked together by a central stalk and a peripheral stalk. During catalysis, ATP synthesis in the catalytic domain of F(1) is coupled via a rotary mechanism of the central stalk subunits to proton translocation. Functionally, this protein is part of the stalk that links CF(0) to CF(1). It either transmits conformational changes from CF(0) to CF(1) or is implicated in proton conduction. This is ATP synthase subunit delta 1 from Syntrophotalea carbinolica (strain DSM 2380 / NBRC 103641 / GraBd1) (Pelobacter carbinolicus).